A 412-amino-acid polypeptide reads, in one-letter code: Phosphoglycerate kinase (412 aa).

Substrate contacts are provided by residues 24–26 (DLN), R44, 67–70 (HLGR), R126, and R170. Residues K220, G308, E339, and 368–371 (GGDS) contribute to the ATP site.

Belongs to the phosphoglycerate kinase family. As to quaternary structure, monomer.

It localises to the cytoplasm. The catalysed reaction is (2R)-3-phosphoglycerate + ATP = (2R)-3-phospho-glyceroyl phosphate + ADP. It functions in the pathway carbohydrate degradation; glycolysis; pyruvate from D-glyceraldehyde 3-phosphate: step 2/5. The protein is Phosphoglycerate kinase of Mycobacteroides abscessus (strain ATCC 19977 / DSM 44196 / CCUG 20993 / CIP 104536 / JCM 13569 / NCTC 13031 / TMC 1543 / L948) (Mycobacterium abscessus).